A 21-amino-acid chain; its full sequence is Large ribosomal subunit protein uL29 (21 aa).

Belongs to the universal ribosomal protein uL29 family.

The sequence is that of Large ribosomal subunit protein uL29 (rpmC) from Brevundimonas diminuta (Pseudomonas diminuta).